A 320-amino-acid polypeptide reads, in one-letter code: Nicotianamine synthase 3 (320 aa).

It belongs to the nicotianamine synthase (NAS)-like family. In terms of tissue distribution, in shoots.

The catalysed reaction is 3 S-adenosyl-L-methionine = nicotianamine + 3 S-methyl-5'-thioadenosine + 3 H(+). In terms of biological role, synthesizes nicotianamine, a polyamine which serves as a sensor for the physiological iron status within the plant, and/or might be involved in the transport of iron. This Arabidopsis thaliana (Mouse-ear cress) protein is Nicotianamine synthase 3 (NAS3).